A 367-amino-acid polypeptide reads, in one-letter code: Peptide chain release factor 2 (367 aa).

N5-methylglutamine is present on Gln-249.

Belongs to the prokaryotic/mitochondrial release factor family. In terms of processing, methylated by PrmC. Methylation increases the termination efficiency of RF2.

The protein localises to the cytoplasm. Functionally, peptide chain release factor 2 directs the termination of translation in response to the peptide chain termination codons UGA and UAA. The sequence is that of Peptide chain release factor 2 from Thermotoga petrophila (strain ATCC BAA-488 / DSM 13995 / JCM 10881 / RKU-1).